A 73-amino-acid chain; its full sequence is Ocellatin-PT8 (73 aa).

Residues 1 to 22 form the signal peptide; that stretch reads MAFLKKSLFLVLFLGLVSLSIC. Positions 23–39 are excised as a propeptide; that stretch reads DEEKRQDEDDDDDDDEE.

In terms of tissue distribution, expressed by the skin glands.

It is found in the secreted. Functionally, has antibacterial activity against Gram-negative bacteria E.coli ATCC 25922 (MIC=60 uM), K.pneumoniae ATCC 700603 (MIC=240 uM) and S.choleraesuis ATCC 14028 (MIC=240 uM) and against Gram-positive bacterium S.aureus ATCC 29313 (MIC=240 uM). Shows no hemolytic activity and no cytotoxicity. In Leptodactylus pustulatus (Ceara white-lipped frog), this protein is Ocellatin-PT8.